The sequence spans 189 residues: Mu-like prophage FluMu protein gp27 (189 aa).

The protein to phage Mu protein gp27.

The polypeptide is Mu-like prophage FluMu protein gp27 (Haemophilus influenzae (strain ATCC 51907 / DSM 11121 / KW20 / Rd)).